We begin with the raw amino-acid sequence, 78 residues long: Short neurotoxin SNTX11 (78 aa).

Positions 1-21 are cleaved as a signal peptide; that stretch reads MKTLLLTFLVVTIVCLDLGYT. 4 disulfides stabilise this stretch: C24–C40, C33–C58, C62–C70, and C71–C76.

This sequence belongs to the three-finger toxin family. Short-chain subfamily. In terms of tissue distribution, expressed by the venom gland.

It is found in the secreted. Functionally, this three-finger toxin binds and inhibits the nicotinic acetylcholine receptor (nAChR). This Ophiophagus hannah (King cobra) protein is Short neurotoxin SNTX11.